The following is a 681-amino-acid chain: MSNKNQRKTKSKDREVRKTNDSSILSKASVEKCGYPGFTVGHSYYQPFIQKSPRRSPSVNRGYWTRCMAIRFAVYQFLKNKTGKRKAIVNLGAGYDPLAFQLLSSHEYNTDDVVFYDVDYPETIENRVQMIRSDSFLSSIVLEDKEFDLDGTEIHTKNYHSFGCNLNLLNQLESCLEKYGIDYCNDAILFISEVAAVYMPRQASEKLIRWMSKFPDAHSCFFEQIAPATFDHPFANVMVKHFKEWGTPLHGLYAYPTIESLKSRWVKNGWEYVEILDVCTFWNFLMDSKLKHLCEMVEPFDEWEEFYFFLQHYSIQHASSKLVGKYDLVESPDPCMQYIRYVKSEIIFNNSPLTLRNSIYSLKRTDLPACLKELPSLRLPAVCDLDDSVIVQGGLSTAGRSKDAYLISEKDDGSIMKITTDSLTSCMGQSVVSIDKKTCMFIGGRESPKKILSSCIYFADGNWSDFPSLPYASHRASSVSIKHNGSSYVVLLAGKPFGGCLIWSDSKRKWNTLKCKDPLFYSRWGACLHWSSKLKKGILCGGMNELNEPVREVLEWEMVLRDDDHFEIVTRVLNFDVQVEILLSRIGSKVVFFGDDSKPIIVGGAAVFRTILWEEESVCINMNDYSVTGVCIEETEKRPVFTMFGISGMGNHLQIFGGGCICFSFGSCLNENATFYKLVSA.

The segment covering 1–11 has biased composition (basic residues); the sequence is MSNKNQRKTKS. A disordered region spans residues 1–21; sequence MSNKNQRKTKSKDREVRKTND. S-adenosyl-L-methionine-binding positions include Arg66, Gly92, Asp119, 165–166, and Glu193; that span reads NL.

The protein belongs to the methyltransferase superfamily. LCMT family.

It carries out the reaction 7-[(3S)-3-amino-3-carboxypropyl]wyosine(37) in tRNA(Phe) + S-adenosyl-L-methionine = 7-[(3S)-(3-amino-3-methoxycarbonyl)propyl]wyosine(37) in tRNA(Phe) + S-adenosyl-L-homocysteine. It catalyses the reaction 7-[(3S)-(3-amino-3-methoxycarbonyl)propyl]wyosine(37) in tRNA(Phe) + S-adenosyl-L-methionine + CO2 = wybutosine(37) in tRNA(Phe) + S-adenosyl-L-homocysteine + 2 H(+). It functions in the pathway tRNA modification; wybutosine-tRNA(Phe) biosynthesis. In terms of biological role, probable S-adenosyl-L-methionine-dependent methyltransferase that acts as a component of the wybutosine biosynthesis pathway. Wybutosine is a hyper modified guanosine with a tricyclic base found at the 3'-position adjacent to the anticodon of eukaryotic phenylalanine tRNA. May methylate the carboxyl group of leucine residues to form alpha-leucine ester residues. The chain is tRNA wybutosine-synthesizing protein 4 (ppm2) from Schizosaccharomyces pombe (strain 972 / ATCC 24843) (Fission yeast).